The primary structure comprises 373 residues: UDP-N-acetylglucosamine--N-acetylmuramyl-(pentapeptide) pyrophosphoryl-undecaprenol N-acetylglucosamine transferase (373 aa).

Residues T14–G16, N128, R165, S199, and Q295 each bind UDP-N-acetyl-alpha-D-glucosamine.

This sequence belongs to the glycosyltransferase 28 family. MurG subfamily.

Its subcellular location is the cell membrane. The catalysed reaction is di-trans,octa-cis-undecaprenyl diphospho-N-acetyl-alpha-D-muramoyl-L-alanyl-D-glutamyl-meso-2,6-diaminopimeloyl-D-alanyl-D-alanine + UDP-N-acetyl-alpha-D-glucosamine = di-trans,octa-cis-undecaprenyl diphospho-[N-acetyl-alpha-D-glucosaminyl-(1-&gt;4)]-N-acetyl-alpha-D-muramoyl-L-alanyl-D-glutamyl-meso-2,6-diaminopimeloyl-D-alanyl-D-alanine + UDP + H(+). The protein operates within cell wall biogenesis; peptidoglycan biosynthesis. In terms of biological role, cell wall formation. Catalyzes the transfer of a GlcNAc subunit on undecaprenyl-pyrophosphoryl-MurNAc-pentapeptide (lipid intermediate I) to form undecaprenyl-pyrophosphoryl-MurNAc-(pentapeptide)GlcNAc (lipid intermediate II). The polypeptide is UDP-N-acetylglucosamine--N-acetylmuramyl-(pentapeptide) pyrophosphoryl-undecaprenol N-acetylglucosamine transferase (Mycobacterium sp. (strain KMS)).